Reading from the N-terminus, the 274-residue chain is Large ribosomal subunit protein uL2 (274 aa).

Residues 223–256 (VVMNPVDHPHGGGEGKTGEGRHPVDPWGNLTKGY) form a disordered region. The segment covering 229–246 (DHPHGGGEGKTGEGRHPV) has biased composition (basic and acidic residues).

It belongs to the universal ribosomal protein uL2 family. In terms of assembly, part of the 50S ribosomal subunit. Forms a bridge to the 30S subunit in the 70S ribosome.

In terms of biological role, one of the primary rRNA binding proteins. Required for association of the 30S and 50S subunits to form the 70S ribosome, for tRNA binding and peptide bond formation. It has been suggested to have peptidyltransferase activity; this is somewhat controversial. Makes several contacts with the 16S rRNA in the 70S ribosome. This is Large ribosomal subunit protein uL2 from Variovorax paradoxus (strain S110).